A 246-amino-acid chain; its full sequence is Ribosomal RNA small subunit methyltransferase J (246 aa).

S-adenosyl-L-methionine is bound by residues 115 to 116 and Asp169; that span reads ER.

It belongs to the methyltransferase superfamily. RsmJ family.

It localises to the cytoplasm. It catalyses the reaction guanosine(1516) in 16S rRNA + S-adenosyl-L-methionine = N(2)-methylguanosine(1516) in 16S rRNA + S-adenosyl-L-homocysteine + H(+). Functionally, specifically methylates the guanosine in position 1516 of 16S rRNA. The polypeptide is Ribosomal RNA small subunit methyltransferase J (Buchnera aphidicola subsp. Acyrthosiphon pisum (strain APS) (Acyrthosiphon pisum symbiotic bacterium)).